The chain runs to 343 residues: L-threonine 3-dehydrogenase (343 aa).

Residue cysteine 39 coordinates Zn(2+). Residues threonine 41 and histidine 44 each act as charge relay system in the active site. Zn(2+)-binding residues include histidine 64, glutamate 65, cysteine 94, cysteine 97, cysteine 100, and cysteine 108. Residues isoleucine 176, aspartate 196, arginine 201, leucine 263 to isoleucine 265, and isoleucine 287 to tyrosine 288 each bind NAD(+).

This sequence belongs to the zinc-containing alcohol dehydrogenase family. As to quaternary structure, homotetramer. The cofactor is Zn(2+).

It is found in the cytoplasm. The catalysed reaction is L-threonine + NAD(+) = (2S)-2-amino-3-oxobutanoate + NADH + H(+). It functions in the pathway amino-acid degradation; L-threonine degradation via oxydo-reductase pathway; glycine from L-threonine: step 1/2. Functionally, catalyzes the NAD(+)-dependent oxidation of L-threonine to 2-amino-3-ketobutyrate. The protein is L-threonine 3-dehydrogenase of Anaeromyxobacter sp. (strain Fw109-5).